The chain runs to 70 residues: uncharacterized protein (70 aa).

The segment at 40–70 (LHQQRTAHKVTSPPSQRPQNSETKSDSQNRS) is disordered. Polar residues predominate over residues 51–61 (SPPSQRPQNSE).

This is an uncharacterized protein from Bdellovibrio phage phiMH2K (Bacteriophage phiMH2K).